Consider the following 219-residue polypeptide: Salivary IL-4-inducing protein (219 aa).

The signal sequence occupies residues 1-19; the sequence is MKYLLTLLMALSLVNLMLT. The disordered stretch occupies residues 19-109; that stretch reads TRPTPEDDGG…KNDPRETYNK (91 aa). Positions 30–43 are enriched in low complexity; that stretch reads SEEPQTQETTGETT. Positions 72 to 107 are enriched in basic and acidic residues; it reads DDTAKKEDDGESKDGEGSEKSDKEKGEPKNDPRETY.

Salivary gland (at protein level).

It is found in the secreted. Its function is as follows. Induces expression of IL4 in host skin by diverting host CD4 cells away from Th1 and towards Th2 responsiveness. Induces expression of IL10 in host skin. Down-regulates expression of IL12B, IFN-gamma (IFNG) and TNF-alpha (TNF) in host skin. This Aedes aegypti (Yellowfever mosquito) protein is Salivary IL-4-inducing protein.